The sequence spans 271 residues: Putative phosphoenolpyruvate synthase regulatory protein (271 aa).

Glycine 152–threonine 159 is an ADP binding site.

It belongs to the pyruvate, phosphate/water dikinase regulatory protein family. PSRP subfamily.

The catalysed reaction is [pyruvate, water dikinase] + ADP = [pyruvate, water dikinase]-phosphate + AMP + H(+). It carries out the reaction [pyruvate, water dikinase]-phosphate + phosphate + H(+) = [pyruvate, water dikinase] + diphosphate. In terms of biological role, bifunctional serine/threonine kinase and phosphorylase involved in the regulation of the phosphoenolpyruvate synthase (PEPS) by catalyzing its phosphorylation/dephosphorylation. The chain is Putative phosphoenolpyruvate synthase regulatory protein from Marinobacter nauticus (strain ATCC 700491 / DSM 11845 / VT8) (Marinobacter aquaeolei).